A 326-amino-acid polypeptide reads, in one-letter code: GTPase IMAP family member 5 (326 aa).

At 1–297 (MEDHGFEELS…MLCRVTSCLD (297 aa)) the chain is on the cytoplasmic side. The AIG1-type G domain maps to 42 to 245 (SGLLRILLVG…HSNDLFVYTQ (204 aa)). GTP contacts are provided by residues 51–59 (GKSGCGKSA), Ser72, 169–171 (HKE), and Asn206. The chain crosses the membrane as a helical; Anchor for type IV membrane protein span at residues 298–318 (WHIAVSVLLIVLGLTLLITLI). Residues 319 to 326 (NMYIGRWK) are Lumenal-facing.

This sequence belongs to the TRAFAC class TrmE-Era-EngA-EngB-Septin-like GTPase superfamily. AIG1/Toc34/Toc159-like paraseptin GTPase family. IAN subfamily. In terms of assembly, interacts with BAD, BAK1, BAX, BCL2, BCL2L1/Bcl-xL and BCL2L11/BimEL. The interaction with BAX is increased, when cells initiate apoptosis upon IL2 withdrawal. Forms a complex with BCL2L1 or MCL1 and HSPA8/HSC70; the interaction between HSPA8 and BCL2L1 or MCL1 is impaired in the absence of GIMAP5. May interact (via N-terminus) with microtubules. Primarily expressed in spleen, heart, lung and intestine and, at lower levels, in kidney, stomach and muscle. Expressed in thymus and lymph nodes (at protein level). In the spleen, expressed in periarteriolar lymphatic sheets. Isoform 2: Expressed at higher levels in T lymphocytes compared to isoform 1.

The protein resides in the lysosome membrane. It is found in the endosome. Its subcellular location is the multivesicular body membrane. It localises to the endosome membrane. Required for mitochondrial integrity and T-cell survival. May contribute to T-cell quiescence. Its function is as follows. Plays a role in T lymphocyte development and the optimal generation of CD4/CD8 double-positive thymocytes. Inhibitor of GSK3A, possibly by sequestering GSK3A in cytoplasmic vesicles and impairing its translocation to the nucleus. Consequently, impairs GSK3A-dependent transcriptional program and regulation of the DNA damage response occurring during T cells proliferation. Required for the survival of peripheral T cells, natural killer (NK) and NK T-cell development and the maintenance of normal liver function. Promotes the survival of quiescent T-cells. May regulate Ca(2+) homeostasis by modulating lysosomal Ca(2+) stores, preventing its accumulation in the absence of T cell activation. May play a role in mitochondrial DNA segregation in hematopoietic tissues. Is a regulator of liver endothelial cell homeostasis. The sequence is that of GTPase IMAP family member 5 (Gimap5) from Rattus norvegicus (Rat).